Here is a 417-residue protein sequence, read N- to C-terminus: UDP-N-acetylglucosamine 1-carboxyvinyltransferase (417 aa).

Residue 22 to 23 (KN) coordinates phosphoenolpyruvate. Position 92 (Arg-92) interacts with UDP-N-acetyl-alpha-D-glucosamine. Cys-116 functions as the Proton donor in the catalytic mechanism. Residue Cys-116 is modified to 2-(S-cysteinyl)pyruvic acid O-phosphothioketal. 2 residues coordinate UDP-N-acetyl-alpha-D-glucosamine: Asp-304 and Ile-326.

Belongs to the EPSP synthase family. MurA subfamily.

Its subcellular location is the cytoplasm. The catalysed reaction is phosphoenolpyruvate + UDP-N-acetyl-alpha-D-glucosamine = UDP-N-acetyl-3-O-(1-carboxyvinyl)-alpha-D-glucosamine + phosphate. Its pathway is cell wall biogenesis; peptidoglycan biosynthesis. Its function is as follows. Cell wall formation. Adds enolpyruvyl to UDP-N-acetylglucosamine. The protein is UDP-N-acetylglucosamine 1-carboxyvinyltransferase of Desulfosudis oleivorans (strain DSM 6200 / JCM 39069 / Hxd3) (Desulfococcus oleovorans).